We begin with the raw amino-acid sequence, 86 residues long: Large ribosomal subunit protein uL23 (86 aa).

This sequence belongs to the universal ribosomal protein uL23 family. In terms of assembly, part of the 50S ribosomal subunit. Contacts protein L29.

Functionally, binds to 23S rRNA. One of the proteins that surrounds the polypeptide exit tunnel on the outside of the ribosome. In Pyrococcus furiosus (strain ATCC 43587 / DSM 3638 / JCM 8422 / Vc1), this protein is Large ribosomal subunit protein uL23.